A 7760-amino-acid chain; its full sequence is Malpinin synthetase (7760 aa).

2 disordered regions span residues 42-115 (ENPE…VNEK) and 161-180 (LDLP…GDRV). Positions 65–79 (TPRSASPLSSYTGSP) are enriched in polar residues. A condensation 1 region spans residues 87-389 (TELSRTLSGD…LSLDERTFLL (303 aa)). The span at 164–180 (PTDRPRPSHPSFEGDRV) shows a compositional bias: basic and acidic residues. Positions 409 to 813 (FEQQAERRPH…GRNDHQVKIR (405 aa)) are adenylation 1. The 75-residue stretch at 926–1000 (PPQGELETAI…AFAHAIGQHR (75 aa)) folds into the Carrier 1 domain. At Ser961 the chain carries O-(pantetheine 4'-phosphoryl)serine. The dual epimerase/condensation (E/C) domain 1 stretch occupies residues 1046–1477 (QDIYALAPLQ…VLPADERKLL (432 aa)). The segment at 1498–1893 (FEQYADRVPN…GRTDYQVKIR (396 aa)) is adenylation 2. Positions 2003 to 2077 (APEGEVENAI…ALAQSIGEHR (75 aa)) constitute a Carrier 2 domain. Residue Ser2038 is modified to O-(pantetheine 4'-phosphoryl)serine. The dual epimerase/condensation (E/C) domain 2 stretch occupies residues 2099-2558 (PLIDLNQNDI…LPTEERQLLT (460 aa)). An adenylation 3 region spans residues 2578 to 2973 (FEQHVDRAPD…GRADFQVKIR (396 aa)). Positions 3083 to 3157 (APQGAVEAAI…ALAQSIGEHR (75 aa)) constitute a Carrier 3 domain. Residue Ser3118 is modified to O-(pantetheine 4'-phosphoryl)serine. The tract at residues 3203 to 3634 (QDIYALAPLQ…HLNVLPAEER (432 aa)) is dual epimerase/condensation (E/C) domain 3. The interval 3658 to 4057 (FEQQAERTPD…GRNDDQIKIR (400 aa)) is adenylation 4. The Carrier 4 domain maps to 4174–4248 (APQGEVETAL…AFASRVQEQL (75 aa)). Position 4209 is an O-(pantetheine 4'-phosphoryl)serine (Ser4209). The interval 4267–4705 (LPLSFAQQRL…AAEILSQDER (439 aa)) is condensation 2. The adenylation 5 stretch occupies residues 4729 to 5133 (FEQRVESTPD…GRNDHQVKIR (405 aa)). The 75-residue stretch at 5250-5324 (APEGEVETAI…VFAASIGHHQ (75 aa)) folds into the Carrier 5 domain. Position 5285 is an O-(pantetheine 4'-phosphoryl)serine (Ser5285). A dual dehydration/condensation (C*) domain region spans residues 5370–5804 (QDIYSLSPLQ…VLPAEERTLL (435 aa)). Residues 5825–6224 (FEQQSERTPE…GRNDDQVKIR (400 aa)) are adenylation 6. In terms of domain architecture, Carrier 6 spans 6338–6412 (APQGEVETAL…ALAQSIGQHH (75 aa)). An O-(pantetheine 4'-phosphoryl)serine modification is found at Ser6373. Residues 6458–6890 (QDIYALSPLQ…QLDTVPAEEH (433 aa)) form a dual epimerase/condensation (E/C) domain 4 region. The interval 6914–7300 (FEHQVERTPA…KFLPDGNVVC (387 aa)) is adenylation 7. One can recognise a Carrier 7 domain in the interval 7428-7503 (EPRGAIENIL…ELAPRLLATG (76 aa)). Position 7463 is an O-(pantetheine 4'-phosphoryl)serine (Ser7463). Residues 7561-7722 (DNGNMASSLD…KPYVQGSIEV (162 aa)) form a thioesterase (TE) domain region.

Belongs to the NRP synthetase family.

Its function is as follows. Heptamodular nonribosomal peptide synthetase that catalyzes the biosynthesis of malpinins, natural products that show biosurfactant activities. Malpinins are acetylated hexapeptides (Ac-D-Leu/Val-D-Arg-D-Leu/Val-L-Phe/Leu-Dhb-D-Trp) containing a non-canonical amino acid derived from dehydration of L-Trp, (Z)-dehydrobutyrine (Dhb), at position 5, as well as a C-terminal D-amino acid, D-tryptophan, that can be oxidized to kynurenine. Incorporated D-amino acids in positions 1, 3 and 4 are variable resulting in the malpinin A-congeners malpinin B to E. Both modules M1 and M3 have relaxed specificity towards aliphatic amino acids (L-Leu &gt; L-Met &gt; L/D-Val &gt; L-Cys), explaining Val at position 1 and 3 in malpinin A-congeners malpinin B to D. The incorporation of L-Leu, but not N-acetyl-L-Leu by module 1 suggests the N-terminal acetylation occurs at a later stage of biosynthesis. Similar to M1 and M3, M4 has a broad substrate spectrum showing the highest activity with L-Phe followed by other hydrophobic amino acids (L-Phe &gt; L-Met = L-Trp). In contrast, M2, M5 and M6 are highly specific for L-Arg, L-Thr, and L-Trp, respectively. Solely, M7 converted its preferred substrate (L-Phe) with a 15 000-fold reduced turnover rate compared to the most active module M6, indicating that its A domain cannot contribute to the malpinin biosynthesis due to low activity. Since the last T domain in malA is apparently not loaded with an amino acid, either the TE domain must offload the oligopeptide from the preceding T domain or the dual E/C domain of M7 must transfer the final peptide chain to the free acceptor T domain of M7 prior to release. The chain is Malpinin synthetase from Mortierella alpina (Oleaginous fungus).